A 423-amino-acid chain; its full sequence is MSAQCCAGQLACCCGSAGCSLCCDCCPRIRQSLSTRFMYALYFILVVVLCCIMMSTTVAHKMKEHIPFFEDMCKGIKAGDTCEKLVGYSAVYRVCFGMACFFFIFCLLTLKINNSKSCRAHIHNGFWFFKLLLLGAMCSGAFFIPDQDTFLNAWRYVGAVGGFLFIGIQLLLLVEFAHKWNKNWTAGTASNKLWYASLALVTLIMYSIATGGLVLMAVFYTQKDSCMENKILLGVNGGLCLLISLVAISPWVQNRQPHSGLLQSGVISCYVTYLTFSALSSKPAEVVLDEHGKNVTICVPDFGQDLYRDENLVTILGTSLLIGCILYSCLTSTTRSSSDALQGRYAAPELEIARCCFCFSPGGEDTEEQQPGKEGPRVIYDEKKGTVYIYSYFHFVFFLASLYVMMTVTNWFNHVRSAFHLLP.

Residues 1 to 36 (MSAQCCAGQLACCCGSAGCSLCCDCCPRIRQSLSTR) are Extracellular-facing. A helical membrane pass occupies residues 37–57 (FMYALYFILVVVLCCIMMSTT). The Cytoplasmic portion of the chain corresponds to 58-89 (VAHKMKEHIPFFEDMCKGIKAGDTCEKLVGYS). Residues 90-110 (AVYRVCFGMACFFFIFCLLTL) traverse the membrane as a helical segment. Residues 111-124 (KINNSKSCRAHIHN) lie on the Extracellular side of the membrane. Asn113 carries an N-linked (GlcNAc...) asparagine glycan. Residues 125-145 (GFWFFKLLLLGAMCSGAFFIP) form a helical membrane-spanning segment. Over 146-156 (DQDTFLNAWRY) the chain is Cytoplasmic. The chain crosses the membrane as a helical span at residues 157 to 177 (VGAVGGFLFIGIQLLLLVEFA). At 178 to 198 (HKWNKNWTAGTASNKLWYASL) the chain is on the extracellular side. A glycan (N-linked (GlcNAc...) asparagine) is linked at Asn183. Residues 199–219 (ALVTLIMYSIATGGLVLMAVF) traverse the membrane as a helical segment. The Cytoplasmic segment spans residues 220–230 (YTQKDSCMENK). The helical transmembrane segment at 231–251 (ILLGVNGGLCLLISLVAISPW) threads the bilayer. The Extracellular portion of the chain corresponds to 252–258 (VQNRQPH). The chain crosses the membrane as a helical span at residues 259–279 (SGLLQSGVISCYVTYLTFSAL). Residues 280–311 (SSKPAEVVLDEHGKNVTICVPDFGQDLYRDEN) lie on the Cytoplasmic side of the membrane. Residues 312–332 (LVTILGTSLLIGCILYSCLTS) form a helical membrane-spanning segment. Residues 333-385 (TTRSSSDALQGRYAAPELEIARCCFCFSPGGEDTEEQQPGKEGPRVIYDEKKG) are Extracellular-facing. The chain crosses the membrane as a helical span at residues 386–406 (TVYIYSYFHFVFFLASLYVMM). Over 407-423 (TVTNWFNHVRSAFHLLP) the chain is Cytoplasmic.

Belongs to the TDE1 family. As to expression, highly expressed in placenta, skeletal muscle, spleen, thymus, testis and peripheral leukocyte and is expressed weakly in the heart, liver and fetal brain.

The protein resides in the cell membrane. Its subcellular location is the cytoplasm. The protein localises to the perinuclear region. The enzyme catalyses a 1,2-diacyl-sn-glycero-3-phospho-L-serine(in) = a 1,2-diacyl-sn-glycero-3-phospho-L-serine(out). It carries out the reaction a 1,2-diacyl-sn-glycero-3-phosphocholine(in) = a 1,2-diacyl-sn-glycero-3-phosphocholine(out). It catalyses the reaction a 1,2-diacyl-sn-glycero-3-phosphoethanolamine(in) = a 1,2-diacyl-sn-glycero-3-phosphoethanolamine(out). In terms of biological role, restriction factor required to restrict infectivity of lentiviruses, such as HIV-1: acts by inhibiting an early step of viral infection. Impairs the penetration of the viral particle into the cytoplasm. Non-ATP-dependent, non-specific lipid transporter for phosphatidylserine, phosphatidylcholine, and phosphatidylethanolamine. Functions as a scramblase that flips lipids in both directions across the membrane. Phospholipid scrambling results in HIV-1 surface exposure of phosphatidylserine and loss of membrane asymmetry, which leads to changes in HIV-1 Env conformation and loss of infectivity. Enhances the incorporation of serine into phosphatidylserine and sphingolipids. May play a role in providing serine molecules for the formation of myelin glycosphingolipids in oligodendrocytes. In Homo sapiens (Human), this protein is Serine incorporator 5.